The primary structure comprises 184 residues: FMRFamide-like neuropeptides 3 (184 aa).

Residues 1 to 23 form the signal peptide; sequence MISPNHLILLFCVNCAFLVASDA. A propeptide spanning residues 24 to 25 is cleaved from the precursor; the sequence is TP. At F35 the chain carries Phenylalanine amide. Positions 39–73 are excised as a propeptide; that stretch reads AIADEMTFEEDGYYPSNVMWKRSTVDSSEPVIRDQ. 4 positions are modified to phenylalanine amide: F82, F95, F111, and F126. The interval 90–110 is disordered; it reads FGTMRFGKRNPENDTPFGTMR. Positions 130–142 are excised as a propeptide; the sequence is EDGNAPFGTMKFG. The disordered stretch occupies residues 150–184; that stretch reads LGTMRFGKRSADDSAPFGTMRFGKRNPLGTMRFGK. F155, F171, and F182 each carry phenylalanine amide.

This sequence belongs to the FARP (FMRFamide related peptide) family. As to expression, each flp gene is expressed in a distinct set of neurons. Flp-3 is expressed in the IL1 and PQR neurons.

It localises to the secreted. In terms of biological role, FMRFamides and FMRFamide-like peptides are neuropeptides. SAEPFGTMRF-amide inhibits the activity of dissected pharyngeal myogenic muscle system. This chain is FMRFamide-like neuropeptides 3, found in Caenorhabditis elegans.